A 571-amino-acid chain; its full sequence is Optineurin (571 aa).

2 disordered regions span residues 1-32 and 100-144; these read MSHQ…HPNL and LSHE…DQLR. The stretch at 38–170 forms a coiled coil; the sequence is EELLQQMKEL…VSELQLKLNS (133 aa). The tract at residues 58–209 is interaction with Rab8; the sequence is MKLNNQAMKG…GPTRTVSIGT (152 aa). Composition is skewed to basic and acidic residues over residues 100-123 and 130-143; these read LSHE…RSSE and RLPR…KDQL. The short motif at 176 to 181 is the LIR element; the sequence is DSFVEI. Ser177 bears the Phosphoserine; by TBK1 mark. Over residues 186 to 197 the composition is skewed to basic and acidic residues; the sequence is GEAEGSVKEIKH. Disordered regions lie at residues 186–210 and 255–291; these read GEAE…IGTS and VSDF…TVGS. Phosphoserine is present on Ser198. Over residues 201-210 the composition is skewed to polar residues; that stretch reads PTRTVSIGTS. The stretch at 233-502 forms a coiled coil; the sequence is CLREGNQKVE…LLKENDAFED (270 aa). Basic and acidic residues-rich tracts occupy residues 255-268 and 275-286; these read VSDF…RSEI and STEKENEEEKGP. Ser336 is modified (phosphoserine). Positions 405 to 571 are interaction with HD; it reads TRKESEKVDR…LQIHVMDCII (167 aa). Positions 406–514 are interaction with MYO6; it reads RKESEKVDRA…RQSLMEMQSR (109 aa). The UBAN signature appears at 468–473; it reads DFHAER. Position 520 is a phosphoserine (Ser520). A CCHC NOA-type zinc finger spans residues 541-571; sequence QRNIPIHSCPKCGEVLPDIDTLQIHVMDCII. Zn(2+)-binding residues include Cys549, Cys552, His565, and Cys569.

As to quaternary structure, self-associates. Interacts with HD. Interacts with GTF3A. Interacts with MYO6. Interacts (via UBAN) with ubiquitinated TFRC. Interacts with GTP-bound Rab8 (RAB8A and/or RAB8B). Interacts with TBC1D17. Interacts with TBK1. Interacts with TRAF3. Binds to linear ubiquitin chains. Interacts with LC3 family members MAP1LC3A, MAP1LC3B, GABARAP, GABARAPL1 and GABARAPL2; OPTN phosphorylation increases the association (at least with MAP1LC3B). Interacts with RAB12; the interaction may be indirect. Interacts with TBK1; this interaction leads to the Golgi localization of TBK1 and its subsequent activation. Interacts with palmitoyltransferase ZDHHC17/HIP14; the interaction does not lead to palmitoylation of OPTN. Interacts with CYLD. Interacts with TOM1; the interaction is indirect and is mediated by MYO6, which acts as a bridge between TOM1 and OPTN. Interacts with USP12; the interaction is independent of USP12 deubiquitinase activity and may be involved in regulation of autophagic flux. Post-translationally, phosphorylated by TBK1, leading to restrict bacterial proliferation in case of infection.

Its subcellular location is the cytoplasm. It localises to the perinuclear region. The protein localises to the golgi apparatus. It is found in the trans-Golgi network. The protein resides in the cytoplasmic vesicle. Its subcellular location is the autophagosome. It localises to the recycling endosome. Plays an important role in the maintenance of the Golgi complex, in membrane trafficking, in exocytosis, through its interaction with myosin VI and Rab8. Links myosin VI to the Golgi complex and plays an important role in Golgi ribbon formation. Negatively regulates the induction of IFNB in response to RNA virus infection. Plays a neuroprotective role in the eye and optic nerve. Probably part of the TNF-alpha signaling pathway that can shift the equilibrium toward induction of cell death. May act by regulating membrane trafficking and cellular morphogenesis via a complex that contains Rab8 and huntingtin (HD). Mediates the interaction of Rab8 with the probable GTPase-activating protein TBC1D17 during Rab8-mediated endocytic trafficking, such as that of transferrin receptor (TFRC/TfR); regulates Rab8 recruitment to tubules emanating from the endocytic recycling compartment. Autophagy receptor that interacts directly with both the cargo to become degraded and an autophagy modifier of the MAP1 LC3 family; targets ubiquitin-coated bacteria (xenophagy) and appears to function in the same pathway as SQSTM1 and CALCOCO2/NDP52. The polypeptide is Optineurin (OPTN) (Macaca fascicularis (Crab-eating macaque)).